A 169-amino-acid polypeptide reads, in one-letter code: Disulfide bond formation protein B (169 aa).

Residues 1 to 14 (MSNDTFYLKREKRF) are Cytoplasmic-facing. A helical membrane pass occupies residues 15 to 31 (LVLLGIICLSLIGGALY). Residues 32-49 (MQIALGEAPCPLCILQRY) lie on the Periplasmic side of the membrane. The cysteines at positions 41 and 44 are disulfide-linked. Residues 50–64 (ALLFIAIFAFIGAAM) traverse the membrane as a helical segment. At 65-71 (NGRRGVT) the chain is on the cytoplasmic side. A helical membrane pass occupies residues 72 to 89 (VFEALVTLSALCGIAAAG). The Periplasmic portion of the chain corresponds to 90–144 (RHAWILAHPSDSCGIDILQPIVDGLPLATLFPTGFQVSGFCTTPYPPVLGLSLAQ). C102 and C130 are disulfide-bonded. Residues 145 to 163 (WALTAFVLTAILVPACIIR) form a helical membrane-spanning segment. Over 164–169 (NRRKPY) the chain is Cytoplasmic.

The protein belongs to the DsbB family.

The protein localises to the cell inner membrane. In terms of biological role, required for disulfide bond formation in some periplasmic proteins. Acts by oxidizing the DsbA protein. The polypeptide is Disulfide bond formation protein B (Pseudomonas syringae pv. tomato (strain ATCC BAA-871 / DC3000)).